The primary structure comprises 255 residues: Ribonuclease HII (255 aa).

Residues 72–255 form the RNase H type-2 domain; the sequence is NYIAGVDEAG…RLSFVKNFVE (184 aa). A divalent metal cation contacts are provided by aspartate 78, glutamate 79, and aspartate 170.

The protein belongs to the RNase HII family. Requires Mn(2+) as cofactor. It depends on Mg(2+) as a cofactor.

It is found in the cytoplasm. The catalysed reaction is Endonucleolytic cleavage to 5'-phosphomonoester.. Endonuclease that specifically degrades the RNA of RNA-DNA hybrids. In Ruminiclostridium cellulolyticum (strain ATCC 35319 / DSM 5812 / JCM 6584 / H10) (Clostridium cellulolyticum), this protein is Ribonuclease HII.